The following is a 212-amino-acid chain: Cyclin-dependent kinase inhibitor 3 (212 aa).

Residues 1 to 12 (MKPPSSIQTSEF) show a composition bias toward polar residues. The tract at residues 1-23 (MKPPSSIQTSEFDSSDEEPIEDE) is disordered. Residues 1–34 (MKPPSSIQTSEFDSSDEEPIEDEQTPIQISWLPL) are interaction with CDK2. The segment covering 13–23 (DSSDEEPIEDE) has biased composition (acidic residues). The region spanning 32-201 (LPLSRVNYSQ…FRDKLAAHLS (170 aa)) is the Tyrosine-protein phosphatase domain. Catalysis depends on Cys-140, which acts as the Phosphocysteine intermediate.

It belongs to the protein-tyrosine phosphatase family. In terms of assembly, interacts with cyclin-dependent kinases such as CDK1, CDK2 and CDK3. Does not interact with CDK4. Interacts (via C-terminus) with phosphorylated CDK2 (via C-terminal helix). Interacts with MS4A3 (via C-terminus); the interaction enhances CDKN3 enzymatic activity.

It is found in the cytoplasm. The protein localises to the perinuclear region. It catalyses the reaction O-phospho-L-tyrosyl-[protein] + H2O = L-tyrosyl-[protein] + phosphate. It carries out the reaction O-phospho-L-seryl-[protein] + H2O = L-seryl-[protein] + phosphate. The enzyme catalyses O-phospho-L-threonyl-[protein] + H2O = L-threonyl-[protein] + phosphate. Its function is as follows. May play a role in cell cycle regulation. Dual specificity phosphatase active toward substrates containing either phosphotyrosine or phosphoserine residues. Dephosphorylates CDK2 at 'Thr-160' in a cyclin-dependent manner. This is Cyclin-dependent kinase inhibitor 3 from Sus scrofa (Pig).